The primary structure comprises 632 residues: MPTTFHEIPRKRPTTPLLDRANTPDGLRRLGEAELETLADELRLELLYTVGQTGGHFGAGLGVIELTIALHYVFDTPDDRLVWDVGHQAYPHKILTGRRERMETLRQKDGIAAFPRRSESEYDTFGVGHSSTSISAALGMAIAARLQNSDRKAIAVIGDGALTAGMAFEALNHAPEVDANMLVILNDNDMSISRNVGGLSNYLAKILSSRTYASMREGSKKVLSRLPGAWEIARRTEEYAKGMLVPGTLFEELGWNYIGPIDGHDLPTLIATLRNMRDLKGPQFLHIVTKKGKGFAPAEVDPIGYHAITKLEPLDAPAAAPKKAGGPKYSGVFGEWLCDMAAADPRLVGITPAMKEGSDLVAFSERFPLRYFDVAIAEQHAVTLAAGMACEGAKPVVAIYSTFLQRGYDQLVHDVAVQNLDVLFAIDRAGLVGEDGPTHAGSFDLSFLRCIPGMVIMTPSDENELRKMLTTGHLYNGPAAVRYPRGTGPNATIEKDLEPIEIGKGVVRRQGSKVALLVFGVQMAEALKVAETLDATVVDMRFVKPMDEALVREIANSHDLLVTIEENAIMGGAGGAVSEFLARENILKSVLHLGLPDVYVEHAKPAQMLAECGLDEVGIEAAVRERLELLNR.

Residues 1 to 25 (MPTTFHEIPRKRPTTPLLDRANTPD) are disordered. Residues histidine 87 and 128-130 (GHS) each bind thiamine diphosphate. Mg(2+) is bound at residue aspartate 159. Residues 160–161 (GA), asparagine 188, phenylalanine 295, and glutamate 378 contribute to the thiamine diphosphate site. Asparagine 188 lines the Mg(2+) pocket.

The protein belongs to the transketolase family. DXPS subfamily. Homodimer. Requires Mg(2+) as cofactor. Thiamine diphosphate is required as a cofactor.

It carries out the reaction D-glyceraldehyde 3-phosphate + pyruvate + H(+) = 1-deoxy-D-xylulose 5-phosphate + CO2. Its pathway is metabolic intermediate biosynthesis; 1-deoxy-D-xylulose 5-phosphate biosynthesis; 1-deoxy-D-xylulose 5-phosphate from D-glyceraldehyde 3-phosphate and pyruvate: step 1/1. In terms of biological role, catalyzes the acyloin condensation reaction between C atoms 2 and 3 of pyruvate and glyceraldehyde 3-phosphate to yield 1-deoxy-D-xylulose-5-phosphate (DXP). In Pseudomonas fluorescens (strain Pf0-1), this protein is 1-deoxy-D-xylulose-5-phosphate synthase.